The primary structure comprises 344 residues: S-adenosylmethionine:tRNA ribosyltransferase-isomerase (344 aa).

Belongs to the QueA family. As to quaternary structure, monomer.

The protein resides in the cytoplasm. The enzyme catalyses 7-aminomethyl-7-carbaguanosine(34) in tRNA + S-adenosyl-L-methionine = epoxyqueuosine(34) in tRNA + adenine + L-methionine + 2 H(+). It participates in tRNA modification; tRNA-queuosine biosynthesis. Functionally, transfers and isomerizes the ribose moiety from AdoMet to the 7-aminomethyl group of 7-deazaguanine (preQ1-tRNA) to give epoxyqueuosine (oQ-tRNA). The sequence is that of S-adenosylmethionine:tRNA ribosyltransferase-isomerase from Rhizorhabdus wittichii (strain DSM 6014 / CCUG 31198 / JCM 15750 / NBRC 105917 / EY 4224 / RW1) (Sphingomonas wittichii).